The primary structure comprises 333 residues: Biotin synthase (333 aa).

Residues 51–278 (RAIQLSTLMS…KSYVRLSAGR (228 aa)) enclose the Radical SAM core domain. Positions 66, 70, and 73 each coordinate [4Fe-4S] cluster. Residues C110, C141, C201, and R273 each coordinate [2Fe-2S] cluster.

The protein belongs to the radical SAM superfamily. Biotin synthase family. As to quaternary structure, homodimer. [4Fe-4S] cluster serves as cofactor. It depends on [2Fe-2S] cluster as a cofactor.

It catalyses the reaction (4R,5S)-dethiobiotin + (sulfur carrier)-SH + 2 reduced [2Fe-2S]-[ferredoxin] + 2 S-adenosyl-L-methionine = (sulfur carrier)-H + biotin + 2 5'-deoxyadenosine + 2 L-methionine + 2 oxidized [2Fe-2S]-[ferredoxin]. It functions in the pathway cofactor biosynthesis; biotin biosynthesis; biotin from 7,8-diaminononanoate: step 2/2. In terms of biological role, catalyzes the conversion of dethiobiotin (DTB) to biotin by the insertion of a sulfur atom into dethiobiotin via a radical-based mechanism. This chain is Biotin synthase, found in Haemophilus influenzae (strain 86-028NP).